A 382-amino-acid polypeptide reads, in one-letter code: Probable dual-specificity RNA methyltransferase RlmN (382 aa).

Glu118 acts as the Proton acceptor in catalysis. A Radical SAM core domain is found at 124 to 370 (YDKRVTMCIS…TTVRDTRGSD (247 aa)). Cys131 and Cys375 are joined by a disulfide. The [4Fe-4S] cluster site is built by Cys138, Cys142, and Cys145. S-adenosyl-L-methionine-binding positions include 196–197 (GE), Ser230, 253–255 (SLH), and Asn332. The active-site S-methylcysteine intermediate is Cys375.

Belongs to the radical SAM superfamily. RlmN family. Requires [4Fe-4S] cluster as cofactor.

The protein resides in the cytoplasm. It carries out the reaction adenosine(2503) in 23S rRNA + 2 reduced [2Fe-2S]-[ferredoxin] + 2 S-adenosyl-L-methionine = 2-methyladenosine(2503) in 23S rRNA + 5'-deoxyadenosine + L-methionine + 2 oxidized [2Fe-2S]-[ferredoxin] + S-adenosyl-L-homocysteine. It catalyses the reaction adenosine(37) in tRNA + 2 reduced [2Fe-2S]-[ferredoxin] + 2 S-adenosyl-L-methionine = 2-methyladenosine(37) in tRNA + 5'-deoxyadenosine + L-methionine + 2 oxidized [2Fe-2S]-[ferredoxin] + S-adenosyl-L-homocysteine. Specifically methylates position 2 of adenine 2503 in 23S rRNA and position 2 of adenine 37 in tRNAs. In Kocuria rhizophila (strain ATCC 9341 / DSM 348 / NBRC 103217 / DC2201), this protein is Probable dual-specificity RNA methyltransferase RlmN.